Consider the following 407-residue polypeptide: F-box protein SKIP23 (407 aa).

Residues 2 to 50 enclose the F-box domain; sequence VDWSTLPKDLLDLISKSLESSFDLIQFRSVCSSWRSAAEPKSPLPTHHL.

In terms of assembly, part of a SCF (ASK-cullin-F-box) protein ligase complex. Interacts with SKP1A/ASK1.

It localises to the nucleus. It participates in protein modification; protein ubiquitination. Component of SCF(ASK-cullin-F-box) E3 ubiquitin ligase complexes, which may mediate the ubiquitination and subsequent proteasomal degradation of target proteins. This chain is F-box protein SKIP23 (SKIP23), found in Arabidopsis thaliana (Mouse-ear cress).